The sequence spans 391 residues: Bifunctional enzyme IspD/IspF (391 aa).

A 2-C-methyl-D-erythritol 4-phosphate cytidylyltransferase region spans residues 1 to 230 (MLAAGRGKRA…KKKMQMFPDI (230 aa)). The tract at residues 231–391 (RTGNGYDVHS…TVLYPGEIPK (161 aa)) is 2-C-methyl-D-erythritol 2,4-cyclodiphosphate synthase. Residues Asp-237 and His-239 each coordinate a divalent metal cation. Residues 237–239 (DVH) and 263–264 (HS) each bind 4-CDP-2-C-methyl-D-erythritol 2-phosphate. His-271 provides a ligand contact to a divalent metal cation. Residues 285 to 287 (DIG), 361 to 364 (TTNE), Phe-368, and Arg-371 each bind 4-CDP-2-C-methyl-D-erythritol 2-phosphate.

It in the N-terminal section; belongs to the IspD/TarI cytidylyltransferase family. IspD subfamily. In the C-terminal section; belongs to the IspF family. Requires a divalent metal cation as cofactor.

It catalyses the reaction 2-C-methyl-D-erythritol 4-phosphate + CTP + H(+) = 4-CDP-2-C-methyl-D-erythritol + diphosphate. The catalysed reaction is 4-CDP-2-C-methyl-D-erythritol 2-phosphate = 2-C-methyl-D-erythritol 2,4-cyclic diphosphate + CMP. Its pathway is isoprenoid biosynthesis; isopentenyl diphosphate biosynthesis via DXP pathway; isopentenyl diphosphate from 1-deoxy-D-xylulose 5-phosphate: step 2/6. The protein operates within isoprenoid biosynthesis; isopentenyl diphosphate biosynthesis via DXP pathway; isopentenyl diphosphate from 1-deoxy-D-xylulose 5-phosphate: step 4/6. In terms of biological role, bifunctional enzyme that catalyzes the formation of 4-diphosphocytidyl-2-C-methyl-D-erythritol from CTP and 2-C-methyl-D-erythritol 4-phosphate (MEP) (IspD), and catalyzes the conversion of 4-diphosphocytidyl-2-C-methyl-D-erythritol 2-phosphate (CDP-ME2P) to 2-C-methyl-D-erythritol 2,4-cyclodiphosphate (ME-CPP) with a corresponding release of cytidine 5-monophosphate (CMP) (IspF). This chain is Bifunctional enzyme IspD/IspF, found in Bartonella quintana (strain Toulouse) (Rochalimaea quintana).